Reading from the N-terminus, the 282-residue chain is Bis(5'-nucleosyl)-tetraphosphatase, symmetrical (282 aa).

The protein belongs to the Ap4A hydrolase family.

It carries out the reaction P(1),P(4)-bis(5'-adenosyl) tetraphosphate + H2O = 2 ADP + 2 H(+). In terms of biological role, hydrolyzes diadenosine 5',5'''-P1,P4-tetraphosphate to yield ADP. The protein is Bis(5'-nucleosyl)-tetraphosphatase, symmetrical of Salmonella paratyphi A (strain ATCC 9150 / SARB42).